The sequence spans 57 residues: Plasma membrane proteolipid 3 (57 aa).

The helical transmembrane segment at 34-54 (INILLTILGYLPGIVHALYII) threads the bilayer.

It belongs to the UPF0057 (PMP3) family.

The protein resides in the cell membrane. Functionally, plays a role in the regulation of membrane potential. Could mediate a proton leak. This is Plasma membrane proteolipid 3 (pmp-1) from Neurospora crassa (strain ATCC 24698 / 74-OR23-1A / CBS 708.71 / DSM 1257 / FGSC 987).